The primary structure comprises 468 residues: 3-isopropylmalate dehydratase large subunit 2 (468 aa).

[4Fe-4S] cluster-binding residues include cysteine 349, cysteine 409, and cysteine 412.

It belongs to the aconitase/IPM isomerase family. LeuC type 1 subfamily. In terms of assembly, heterodimer of LeuC and LeuD. Requires [4Fe-4S] cluster as cofactor.

It carries out the reaction (2R,3S)-3-isopropylmalate = (2S)-2-isopropylmalate. It participates in amino-acid biosynthesis; L-leucine biosynthesis; L-leucine from 3-methyl-2-oxobutanoate: step 2/4. Its function is as follows. Catalyzes the isomerization between 2-isopropylmalate and 3-isopropylmalate, via the formation of 2-isopropylmaleate. The chain is 3-isopropylmalate dehydratase large subunit 2 from Bradyrhizobium diazoefficiens (strain JCM 10833 / BCRC 13528 / IAM 13628 / NBRC 14792 / USDA 110).